The following is a 389-amino-acid chain: Large envelope protein (389 aa).

Residue methionine 1 is modified to N-acetylmethionine. A lipid anchor (N-myristoyl glycine; by host) is attached at glycine 2. Residues 2-108 (GTNLSVPNPL…PPLRDSHPQA (107 aa)) are pre-S1. Positions 2–163 (GTNLSVPNPL…SSRTGDPALN (162 aa)) are pre-S. Over 2–170 (GTNLSVPNPL…ALNMENITSG (169 aa)) the chain is Virion surface; in external conformation. Topologically, residues 2-242 (GTNLSVPNPL…PGYRWMCLRR (241 aa)) are intravirion; in internal conformation. The disordered stretch occupies residues 79-103 (TVPPTASTNRQSGRQPTPISPPLRD). The span at 84–95 (ASTNRQSGRQPT) shows a compositional bias: polar residues. Positions 109-163 (MQWNSTALHQALQDPRVRGLYFPAGGSSSGTLNPVPNTASHISSISSRTGDPALN) are pre-S2. The chain crosses the membrane as a helical span at residues 171–191 (FLGPLLVLQAGFFLLTRILTI). The Intravirion; in external conformation segment spans residues 192 to 242 (PQSLDSWWTSLNFLGGSPVCLGQNSQYPTSNHSPTSCPPICPGYRWMCLRR). The chain crosses the membrane as a helical span at residues 243–263 (FIIFLFILLLCLIFLLVLLDY). The Virion surface segment spans residues 264-337 (QGMLPVCPLI…WASVRFSWLS (74 aa)). Asparagine 309 carries an N-linked (GlcNAc...) asparagine; by host glycan. Residues 338 to 358 (LLVPFVQWFVGLSPTVWLSVI) traverse the membrane as a helical segment. Topologically, residues 359-364 (WMMWYW) are intravirion. The helical transmembrane segment at 365–387 (GPSLYNIVSPFIPLLPIFFCLWV) threads the bilayer. Topologically, residues 388 to 389 (YI) are virion surface.

It belongs to the orthohepadnavirus major surface antigen family. As to quaternary structure, in its internal form (Li-HBsAg), interacts with the capsid protein and with the isoform S. Interacts with host chaperone CANX. Associates with host chaperone CANX through its pre-S2 N glycan; this association may be essential for isoform M proper secretion. In terms of assembly, interacts with isoform L. Interacts with the antigens of satellite virus HDV (HDVAgs); this interaction is required for encapsidation of HDV genomic RNA. Isoform M is N-terminally acetylated by host at a ratio of 90%, and N-glycosylated by host at the pre-S2 region. Post-translationally, myristoylated.

It localises to the virion membrane. In terms of biological role, the large envelope protein exists in two topological conformations, one which is termed 'external' or Le-HBsAg and the other 'internal' or Li-HBsAg. In its external conformation the protein attaches the virus to cell receptors and thereby initiating infection. This interaction determines the species specificity and liver tropism. This attachment induces virion internalization predominantly through caveolin-mediated endocytosis. The large envelope protein also assures fusion between virion membrane and endosomal membrane. In its internal conformation the protein plays a role in virion morphogenesis and mediates the contact with the nucleocapsid like a matrix protein. Functionally, the middle envelope protein plays an important role in the budding of the virion. It is involved in the induction of budding in a nucleocapsid independent way. In this process the majority of envelope proteins bud to form subviral lipoprotein particles of 22 nm of diameter that do not contain a nucleocapsid. The polypeptide is Large envelope protein (Hepatitis B virus genotype A1 subtype adw2 (isolate South Africa/84/2001) (HBV-A)).